The sequence spans 172 residues: Protein-export protein SecB (172 aa).

A disordered region spans residues 1–22 (MADETSADINNPALQPNGEDTS). Positions 7-20 (ADINNPALQPNGED) are enriched in polar residues.

This sequence belongs to the SecB family. In terms of assembly, homotetramer, a dimer of dimers. One homotetramer interacts with 1 SecA dimer.

It is found in the cytoplasm. In terms of biological role, one of the proteins required for the normal export of preproteins out of the cell cytoplasm. It is a molecular chaperone that binds to a subset of precursor proteins, maintaining them in a translocation-competent state. It also specifically binds to its receptor SecA. The protein is Protein-export protein SecB of Sphingopyxis alaskensis (strain DSM 13593 / LMG 18877 / RB2256) (Sphingomonas alaskensis).